The primary structure comprises 351 residues: tRNA N6-adenosine threonylcarbamoyltransferase (351 aa).

Residues H111 and H115 each contribute to the Fe cation site. Substrate is bound by residues 134 to 138, D167, G180, and N276; that span reads LVSGG. D304 provides a ligand contact to Fe cation.

This sequence belongs to the KAE1 / TsaD family. It depends on Fe(2+) as a cofactor.

The protein resides in the cytoplasm. The catalysed reaction is L-threonylcarbamoyladenylate + adenosine(37) in tRNA = N(6)-L-threonylcarbamoyladenosine(37) in tRNA + AMP + H(+). In terms of biological role, required for the formation of a threonylcarbamoyl group on adenosine at position 37 (t(6)A37) in tRNAs that read codons beginning with adenine. Is involved in the transfer of the threonylcarbamoyl moiety of threonylcarbamoyl-AMP (TC-AMP) to the N6 group of A37, together with TsaE and TsaB. TsaD likely plays a direct catalytic role in this reaction. This chain is tRNA N6-adenosine threonylcarbamoyltransferase, found in Marinobacter nauticus (strain ATCC 700491 / DSM 11845 / VT8) (Marinobacter aquaeolei).